An 86-amino-acid polypeptide reads, in one-letter code: Large ribosomal subunit protein bL27 (86 aa).

Over residues 1 to 10 (MAQKKGGGST) the composition is skewed to gly residues. The interval 1-21 (MAQKKGGGSTRNGRDSESKRL) is disordered.

It belongs to the bacterial ribosomal protein bL27 family.

The chain is Large ribosomal subunit protein bL27 from Ralstonia pickettii (strain 12J).